A 171-amino-acid chain; its full sequence is S-ribosylhomocysteine lyase (171 aa).

Fe cation contacts are provided by H54, H58, and C128.

The protein belongs to the LuxS family. As to quaternary structure, homodimer. The cofactor is Fe cation.

It catalyses the reaction S-(5-deoxy-D-ribos-5-yl)-L-homocysteine = (S)-4,5-dihydroxypentane-2,3-dione + L-homocysteine. Functionally, involved in the synthesis of autoinducer 2 (AI-2) which is secreted by bacteria and is used to communicate both the cell density and the metabolic potential of the environment. The regulation of gene expression in response to changes in cell density is called quorum sensing. Catalyzes the transformation of S-ribosylhomocysteine (RHC) to homocysteine (HC) and 4,5-dihydroxy-2,3-pentadione (DPD). This Proteus mirabilis (strain HI4320) protein is S-ribosylhomocysteine lyase.